The primary structure comprises 1755 residues: Transposon Ty1-DR1 Gag-Pol polyprotein (1755 aa).

Polar residues-rich tracts occupy residues 1-10, 48-60, and 127-152; these read MESQQLSNYP, TKAN…TPAS, and QSQF…GNTF. Disordered regions lie at residues 1 to 93, 126 to 173, and 352 to 421; these read MESQ…MMTQ, PQSQ…RPPP, and GSRN…SKST. Positions 153 to 165 are enriched in low complexity; that stretch reads TDSSSADSDMTST. An RNA-binding region spans residues 299-401; that stretch reads NNGIHINNKV…NSKSKTARAH (103 aa). Residues 402-418 show a composition bias toward low complexity; the sequence is NVSTSNNSPSTDNDSIS. Residue S416 is modified to Phosphoserine. The active-site For protease activity; shared with dimeric partner is the D461. The interval 583 to 640 is integrase-type zinc finger-like; sequence NVHTSESTRKYPYPFIHRMLAHANAQTIRYSLKNNTITYFNESDVDWSSAIDYQCPDC. Positions 660 to 835 constitute an Integrase catalytic domain; the sequence is NSYEPFQYLH…AGLDISTLLP (176 aa). 2 residues coordinate Mg(2+): D671 and D736. Disordered stretches follow at residues 956–1087, 1092–1111, and 1130–1187; these read SKAV…ETEK, RSPS…NIVP, and DLPL…DNET. Positions 960–969 are enriched in low complexity; the sequence is SPTDSTPPST. Polar residues predominate over residues 1005 to 1015; that stretch reads STPQISNIEST. Residues 1038 to 1053 show a composition bias toward basic and acidic residues; it reads ESSHASKSKDFRHSDS. 2 stretches are compositionally biased toward polar residues: residues 1054–1082 and 1101–1111; these read YSEN…QISD and PENNSSHNIVP. Residues 1178–1212 carry the Bipartite nuclear localization signal motif; sequence KKRSLEDNETEIKVSRDTWNTKNMRSLEPPRSKKR. Residues 1338–1476 form the Reverse transcriptase Ty1/copia-type domain; sequence NNYYITQLDI…DILGLEIKYQ (139 aa). Mg(2+) contacts are provided by D1346, D1427, D1428, D1610, E1652, and D1685. Residues 1610–1752 form the RNase H Ty1/copia-type domain; sequence DASYGNQPYY…IKTFKLLTNK (143 aa).

The capsid protein forms a homotrimer, from which the VLPs are assembled. The protease is a homodimer, whose active site consists of two apposed aspartic acid residues. Post-translationally, initially, virus-like particles (VLPs) are composed of the structural unprocessed proteins Gag and Gag-Pol, and also contain the host initiator methionine tRNA (tRNA(i)-Met) which serves as a primer for minus-strand DNA synthesis, and a dimer of genomic Ty RNA. Processing of the polyproteins occurs within the particle and proceeds by an ordered pathway, called maturation. First, the protease (PR) is released by autocatalytic cleavage of the Gag-Pol polyprotein yielding capsid protein p45 and a Pol-p154 precursor protein. This cleavage is a prerequisite for subsequent processing of Pol-p154 at the remaining sites to release the mature structural and catalytic proteins. Maturation takes place prior to the RT reaction and is required to produce transposition-competent VLPs.

The protein resides in the cytoplasm. It localises to the nucleus. The enzyme catalyses DNA(n) + a 2'-deoxyribonucleoside 5'-triphosphate = DNA(n+1) + diphosphate. It carries out the reaction Endonucleolytic cleavage to 5'-phosphomonoester.. Functionally, capsid protein (CA) is the structural component of the virus-like particle (VLP), forming the shell that encapsulates the retrotransposons dimeric RNA genome. The particles are assembled from trimer-clustered units and there are holes in the capsid shells that allow for the diffusion of macromolecules. CA also has nucleocapsid-like chaperone activity, promoting primer tRNA(i)-Met annealing to the multipartite primer-binding site (PBS), dimerization of Ty1 RNA and initiation of reverse transcription. In terms of biological role, the aspartyl protease (PR) mediates the proteolytic cleavages of the Gag and Gag-Pol polyproteins after assembly of the VLP. Reverse transcriptase/ribonuclease H (RT) is a multifunctional enzyme that catalyzes the conversion of the retro-elements RNA genome into dsDNA within the VLP. The enzyme displays a DNA polymerase activity that can copy either DNA or RNA templates, and a ribonuclease H (RNase H) activity that cleaves the RNA strand of RNA-DNA heteroduplexes during plus-strand synthesis and hydrolyzes RNA primers. The conversion leads to a linear dsDNA copy of the retrotransposon that includes long terminal repeats (LTRs) at both ends. Its function is as follows. Integrase (IN) targets the VLP to the nucleus, where a subparticle preintegration complex (PIC) containing at least integrase and the newly synthesized dsDNA copy of the retrotransposon must transit the nuclear membrane. Once in the nucleus, integrase performs the integration of the dsDNA into the host genome. The polypeptide is Transposon Ty1-DR1 Gag-Pol polyprotein (TY1B-DR1) (Saccharomyces cerevisiae (strain ATCC 204508 / S288c) (Baker's yeast)).